Here is a 428-residue protein sequence, read N- to C-terminus: D-amino acid dehydrogenase (428 aa).

3-17 (VVILGSGVVGVASAY) provides a ligand contact to FAD.

This sequence belongs to the DadA oxidoreductase family. Requires FAD as cofactor.

It catalyses the reaction a D-alpha-amino acid + A + H2O = a 2-oxocarboxylate + AH2 + NH4(+). It participates in amino-acid degradation; D-alanine degradation; NH(3) and pyruvate from D-alanine: step 1/1. Oxidative deamination of D-amino acids. The polypeptide is D-amino acid dehydrogenase (Burkholderia thailandensis (strain ATCC 700388 / DSM 13276 / CCUG 48851 / CIP 106301 / E264)).